A 66-amino-acid chain; its full sequence is U1-theraphotoxin-Cg1a 2 (66 aa).

A signal peptide spans 1–21 (MKTSALFVIFGLVLLFCNSFA). Residues 22–29 (AELEMTGR) constitute a propeptide that is removed on maturation. 3 disulfides stabilise this stretch: C31-C46, C38-C51, and C45-C58. P63 carries the proline amide modification.

It belongs to the neurotoxin 10 (Hwtx-1) family. 46 (Jztx-7/10/12) subfamily. As to expression, expressed by the venom gland.

The protein localises to the secreted. Its function is as follows. Probable ion channel inhibitor. The protein is U1-theraphotoxin-Cg1a 2 of Chilobrachys guangxiensis (Chinese earth tiger tarantula).